Reading from the N-terminus, the 333-residue chain is Protoheme IX farnesyltransferase (333 aa).

The next 7 helical transmembrane spans lie at 64-84 (LICT…LNCL), 110-130 (TVFL…VSGV), 133-153 (LAAG…TVIL), 161-181 (IVFG…AATG), 189-209 (WLFG…AILL), 246-266 (IMGV…LLPF), and 287-307 (AKSL…LLLI).

It belongs to the UbiA prenyltransferase family. Protoheme IX farnesyltransferase subfamily.

The protein resides in the cell inner membrane. It carries out the reaction heme b + (2E,6E)-farnesyl diphosphate + H2O = Fe(II)-heme o + diphosphate. It participates in porphyrin-containing compound metabolism; heme O biosynthesis; heme O from protoheme: step 1/1. Functionally, converts heme B (protoheme IX) to heme O by substitution of the vinyl group on carbon 2 of heme B porphyrin ring with a hydroxyethyl farnesyl side group. This is Protoheme IX farnesyltransferase from Prochlorococcus marinus (strain AS9601).